A 145-amino-acid polypeptide reads, in one-letter code: Large ribosomal subunit protein uL13 (145 aa).

Belongs to the universal ribosomal protein uL13 family. In terms of assembly, part of the 50S ribosomal subunit.

This protein is one of the early assembly proteins of the 50S ribosomal subunit, although it is not seen to bind rRNA by itself. It is important during the early stages of 50S assembly. In Staphylococcus epidermidis (strain ATCC 35984 / DSM 28319 / BCRC 17069 / CCUG 31568 / BM 3577 / RP62A), this protein is Large ribosomal subunit protein uL13.